Reading from the N-terminus, the 329-residue chain is Cytosolic arginine sensor for mTORC1 subunit 1 (329 aa).

Ser-14 is subject to Phosphoserine. ACT domains lie at Ala-72 to Ala-138 and Gly-260 to Gln-321. L-arginine contacts are provided by residues Ser-111–Val-112, Gly-274, Ile-280–Val-281, and Thr-300–Asp-304.

It belongs to the GATS family. In terms of assembly, forms homodimers and heterodimers with CASTOR2. Interacts with the GATOR2 complex which is composed of MIOS, SEC13, SEH1L, WDR24 and WDR59; the interaction is negatively regulated by arginine. Interacts with TM4SF5; the interaction is positively regulated by leucine and is negatively regulated by arginine. In terms of processing, phosphorylation at Ser-14 by AKT1, promoting the interaction between CASTOR1 and RNF167. Post-translationally, ubiquitinated by RNF167 via 'Lys-29'-polyubiquitination, leading to its degradation, releasing the GATOR2 complex. Ubiquitination by RNF167 is promoted by phosphorylation at Ser-14 by AKT1.

It is found in the cytoplasm. It localises to the cytosol. Functions as an intracellular arginine sensor within the amino acid-sensing branch of the TORC1 signaling pathway. As a homodimer or a heterodimer with CASTOR2, binds and inhibits the GATOR subcomplex GATOR2 and thereby mTORC1. Binding of arginine to CASTOR1 allosterically disrupts the interaction of CASTOR1-containing dimers with GATOR2 which can in turn activate mTORC1 and the TORC1 signaling pathway. In Pongo abelii (Sumatran orangutan), this protein is Cytosolic arginine sensor for mTORC1 subunit 1.